The sequence spans 281 residues: Alcohol dehydrogenase-related 31 kDa protein (281 aa).

Residue 11 to 34 (YVADCGGIALETSKVLMTKNIAKL) participates in NAD(+) binding. A substrate-binding site is contributed by Ser-139. Tyr-152 (proton acceptor) is an active-site residue.

Belongs to the short-chain dehydrogenases/reductases (SDR) family.

The sequence is that of Alcohol dehydrogenase-related 31 kDa protein (Adhr) from Drosophila ambigua (Fruit fly).